A 375-amino-acid polypeptide reads, in one-letter code: MKLLANIFLSGLAILACVSCSKDEDPVLPLEGAKLSVAVKASGTATKAYNPNDVNELEGEAYINNLAVVVFNETGTELLGYKWEALSGAEHSAIIADVPTTKAVRARIIVLANVPRDLLSTVSTYDEFQTRLVDLSSQSQTNLTMSSQVIVTKSALSEEDNYLGYTDLGDQNVDGISDPILLTRVAARIDLVNISTRFAGTPFAGREVRIDAVGIYNMKTKSYYFSEADWGETEAPDAVRNSEDTSFEDLLVNDGTSISNTPFVHYVMENMKSDDHTMIAVKATLRGNSSYQDHTKIFTAVINAGGLQNGYDHNFIRRNYVYRLRIYFDGESFDNIPVTPDPGPGPDPEPEVDTNLNIAVQVVGWGPVMQHPVID.

Positions methionine 1–alanine 16 are cleaved as a signal peptide. A lipid anchor (N-palmitoyl cysteine) is attached at cysteine 17. Cysteine 17 is lipidated: S-diacylglycerol cysteine. Positions cysteine 17 to lysine 47 are excised as a propeptide.

This sequence belongs to the bacteroidetes fimbrillin superfamily. FimA/Mfa1 family. In terms of assembly, may be part of the fimbrial tip.

Its subcellular location is the fimbrium. The protein resides in the cell outer membrane. In terms of biological role, probably a component of the fimbrium tip. Fimbriae are filamentous appendages on the cell surface that mediate cell adhesion and biofilm formation. In Parabacteroides distasonis (strain ATCC 8503 / DSM 20701 / CIP 104284 / JCM 5825 / NCTC 11152), this protein is Putative fimbrium tip subunit Fim1C.